We begin with the raw amino-acid sequence, 388 residues long: Succinate--CoA ligase [ADP-forming] subunit beta (388 aa).

Residues 9–244 (KQLFARYGLP…QSQEDPREAQ (236 aa)) enclose the ATP-grasp domain. ATP contacts are provided by residues K46, 53–55 (GRG), E99, T102, and E107. Positions 199 and 213 each coordinate Mg(2+). Substrate-binding positions include N264 and 321–323 (GIV).

The protein belongs to the succinate/malate CoA ligase beta subunit family. In terms of assembly, heterotetramer of two alpha and two beta subunits. The cofactor is Mg(2+).

The catalysed reaction is succinate + ATP + CoA = succinyl-CoA + ADP + phosphate. It catalyses the reaction GTP + succinate + CoA = succinyl-CoA + GDP + phosphate. It participates in carbohydrate metabolism; tricarboxylic acid cycle; succinate from succinyl-CoA (ligase route): step 1/1. In terms of biological role, succinyl-CoA synthetase functions in the citric acid cycle (TCA), coupling the hydrolysis of succinyl-CoA to the synthesis of either ATP or GTP and thus represents the only step of substrate-level phosphorylation in the TCA. The beta subunit provides nucleotide specificity of the enzyme and binds the substrate succinate, while the binding sites for coenzyme A and phosphate are found in the alpha subunit. The polypeptide is Succinate--CoA ligase [ADP-forming] subunit beta (Salmonella choleraesuis (strain SC-B67)).